A 518-amino-acid polypeptide reads, in one-letter code: Maturase K (518 aa).

The protein belongs to the intron maturase 2 family. MatK subfamily.

The protein localises to the plastid. The protein resides in the chloroplast. Usually encoded in the trnK tRNA gene intron. Probably assists in splicing its own and other chloroplast group II introns. This is Maturase K from Syzygium cumini (Java plum).